The primary structure comprises 128 residues: Large ribosomal subunit protein bL20c (128 aa).

Belongs to the bacterial ribosomal protein bL20 family.

Its subcellular location is the plastid. Functionally, binds directly to 23S ribosomal RNA and is necessary for the in vitro assembly process of the 50S ribosomal subunit. It is not involved in the protein synthesizing functions of that subunit. This chain is Large ribosomal subunit protein bL20c (rpl20), found in Epifagus virginiana (Beechdrops).